We begin with the raw amino-acid sequence, 525 residues long: Nucleolar complex protein 4 homolog (525 aa).

Transmembrane regions (helical) follow at residues 305 to 325 (AAYD…FVPI), 356 to 376 (FFHL…LVAA), and 384 to 404 (LSLT…CNLI).

The protein belongs to the CBF/MAK21 family.

It localises to the nucleus membrane. It is found in the nucleus. Its subcellular location is the nucleolus. In Danio rerio (Zebrafish), this protein is Nucleolar complex protein 4 homolog (noc4l).